The sequence spans 443 residues: Putative rhamnogalacturonase D (443 aa).

An N-terminal signal peptide occupies residues 1–16 (MLVTSLIALLPAIAAA). Cys37 and Cys63 are oxidised to a cystine. Residues Asn47, Asn103, Asn124, and Asn152 are each glycosylated (N-linked (GlcNAc...) asparagine). Asp215 acts as the Proton donor in catalysis. Cys217 and Cys234 are oxidised to a cystine. N-linked (GlcNAc...) asparagine glycosylation is found at Asn235, Asn250, Asn263, Asn276, and Asn281. Cys338 and Cys344 are joined by a disulfide. N-linked (GlcNAc...) asparagine glycosylation is present at Asn346. A disulfide bridge connects residues Cys366 and Cys375. A glycan (N-linked (GlcNAc...) asparagine) is linked at Asn380.

It belongs to the glycosyl hydrolase 28 family.

The protein resides in the secreted. Functionally, pectinolytic enzymes consist of four classes of enzymes: pectine lyase, polygalacturonase, pectin methylesterase and rhamnogalacturonase. Hydrolyzes alpha-D-galacturonopyranosyl-(1,2)-alpha-L-rhamnopyranosyl linkages in the backbone of the hairy regions of pectins. The protein is Putative rhamnogalacturonase D (rhgD) of Aspergillus niger (strain ATCC MYA-4892 / CBS 513.88 / FGSC A1513).